The primary structure comprises 240 residues: Bidirectional sugar transporter SWEET5 (240 aa).

The Extracellular segment spans residues 1–9 (MTDPHTART). A helical transmembrane segment spans residues 10-30 (IVGIVGNVISFGLFCAPIPTM). The MtN3/slv 1 domain maps to 10–95 (IVGIVGNVIS…YVTIFFVFAT (86 aa)). The Cytoplasmic portion of the chain corresponds to 31-45 (VKIWKMKSVSEFKPD). A helical transmembrane segment spans residues 46-66 (PYVATVLNCMMWTFYGLPFVQ). Residues 67 to 72 (PDSLLV) lie on the Extracellular side of the membrane. The chain crosses the membrane as a helical span at residues 73–93 (ITINGTGLFMELVYVTIFFVF). Topologically, residues 94–103 (ATSPVRRKIT) are cytoplasmic. The helical transmembrane segment at 104–124 (IAMVIEVIFMAVVIFCTMYFL) threads the bilayer. The Extracellular segment spans residues 125–131 (HTTKQRS). The chain crosses the membrane as a helical span at residues 132–152 (MLIGILCIVFNVIMYAAPLTV). Residues 133–217 (LIGILCIVFN…IIYITYYKTT (85 aa)) form the MtN3/slv 2 domain. Topologically, residues 153–165 (MKLVIKTKSVKYM) are cytoplasmic. Residues 166–186 (PFFLSLANFMNGVVWVIYACL) traverse the membrane as a helical segment. Topologically, residues 187-190 (KFDP) are extracellular. The helical transmembrane segment at 191-211 (YILIPNGLGSLSGIIQLIIYI) threads the bilayer. Residues 212–240 (TYYKTTNWNDDDEDKEKRYSNAGIELGQA) lie on the Cytoplasmic side of the membrane.

It belongs to the SWEET sugar transporter family. Forms homooligomers and heterooligomers with SWEET6, SWEET8, SWEET9, SWEET11 and SWEET12.

It localises to the cell membrane. Its function is as follows. Mediates both low-affinity uptake and efflux of sugar across the plasma membrane. May play roles in nurturing the male gametophyte. In Arabidopsis thaliana (Mouse-ear cress), this protein is Bidirectional sugar transporter SWEET5.